The primary structure comprises 397 residues: ATP-dependent RNA helicase eIF4A (397 aa).

The Q motif signature appears at 23–51 (YKFDDLNLKPNIVRGIFGYGYETPSAIQQ). Residues 54–224 (ILPITEGRDV…TKFMNNPVRI (171 aa)) enclose the Helicase ATP-binding domain. An ATP-binding site is contributed by 67–74 (AQSGTGKT). A DEAD box motif is present at residues 172–175 (DEAD). The Helicase C-terminal domain occupies 235 to 396 (GIKQFYINVE…EMPADIGALF (162 aa)).

The protein belongs to the DEAD box helicase family. eIF4A subfamily. As to quaternary structure, component of the eIF4F complex, which composition varies with external and internal environmental conditions. It is composed of at least eIF4A, eIF4E and eIF4G.

Its subcellular location is the cytoplasm. It catalyses the reaction ATP + H2O = ADP + phosphate + H(+). ATP-dependent RNA helicase which is a subunit of the eIF4F complex involved in cap recognition and is required for mRNA binding to ribosome. In the current model of translation initiation, eIF4A unwinds RNA secondary structures in the 5'-UTR of mRNAs which is necessary to allow efficient binding of the small ribosomal subunit, and subsequent scanning for the initiator codon. The chain is ATP-dependent RNA helicase eIF4A (TIF1) from Scheffersomyces stipitis (strain ATCC 58785 / CBS 6054 / NBRC 10063 / NRRL Y-11545) (Yeast).